Consider the following 183-residue polypeptide: COMM domain-containing protein 8 (183 aa).

Positions 116-183 constitute a COMM domain; sequence QLQDFDWQVK…AANKVVLQLK (68 aa).

The protein belongs to the COMM domain-containing protein 8 family. In terms of assembly, component of the commander complex consisting of the CCC subcomplex and the retriever subcomplex. Component of the CCC (COMMD/CCDC22/CCDC93) subcomplex consisting of COMMD1, COMMD2, COMMD3, COMMD4, COMMD5, COMMD6, COMMD7, COMMD8, COMMD9, COMMD10, CCDC22 and CCDC93; within the complex forms a heterodimer with COMMD4. Interacts with RELA, RELB, NFKB1/p105. Interacts with CCDC22, CCDC93, SCNN1B, CUL1, CUL2, CUL3, CUL4A, CUL4B, CUL5. Widely expressed with highest expression in thyroid.

The protein resides in the cytoplasm. Its subcellular location is the nucleus. Scaffold protein in the commander complex that is essential for endosomal recycling of transmembrane cargos; the commander complex is composed of the CCC subcomplex and the retriever subcomplex. May modulate activity of cullin-RING E3 ubiquitin ligase (CRL) complexes. May down-regulate activation of NF-kappa-B. The protein is COMM domain-containing protein 8 (COMMD8) of Homo sapiens (Human).